A 207-amino-acid polypeptide reads, in one-letter code: Large ribosomal subunit protein uL4 (207 aa).

The segment at 59–78 (GSGKKPFKQKGTGQARQGCK) is disordered.

This sequence belongs to the universal ribosomal protein uL4 family. As to quaternary structure, part of the 50S ribosomal subunit.

One of the primary rRNA binding proteins, this protein initially binds near the 5'-end of the 23S rRNA. It is important during the early stages of 50S assembly. It makes multiple contacts with different domains of the 23S rRNA in the assembled 50S subunit and ribosome. Functionally, forms part of the polypeptide exit tunnel. In Geotalea daltonii (strain DSM 22248 / JCM 15807 / FRC-32) (Geobacter daltonii), this protein is Large ribosomal subunit protein uL4.